We begin with the raw amino-acid sequence, 519 residues long: Ribonuclease Y 1 (519 aa).

A helical membrane pass occupies residues 2-22 (IILYIILAIIAIVVGYCAGFF). Residues 84–113 (QKQEDRLLQREDSLDRKDNSFEKRENSLER) form a disordered region. Residues 209–294 (TITVVSLPND…EMVEKAKKEM (86 aa)) enclose the KH domain. Positions 335–428 (VLNHSIEVAN…VAAANSISAA (94 aa)) constitute an HD domain.

This sequence belongs to the RNase Y family.

It is found in the cell membrane. Endoribonuclease that initiates mRNA decay. The chain is Ribonuclease Y 1 from Pediococcus pentosaceus (strain ATCC 25745 / CCUG 21536 / LMG 10740 / 183-1w).